A 238-amino-acid polypeptide reads, in one-letter code: Aspartate/glutamate leucyltransferase (238 aa).

This sequence belongs to the R-transferase family. Bpt subfamily.

It is found in the cytoplasm. It carries out the reaction N-terminal L-glutamyl-[protein] + L-leucyl-tRNA(Leu) = N-terminal L-leucyl-L-glutamyl-[protein] + tRNA(Leu) + H(+). The catalysed reaction is N-terminal L-aspartyl-[protein] + L-leucyl-tRNA(Leu) = N-terminal L-leucyl-L-aspartyl-[protein] + tRNA(Leu) + H(+). Functionally, functions in the N-end rule pathway of protein degradation where it conjugates Leu from its aminoacyl-tRNA to the N-termini of proteins containing an N-terminal aspartate or glutamate. This is Aspartate/glutamate leucyltransferase from Aeromonas salmonicida (strain A449).